Here is a 635-residue protein sequence, read N- to C-terminus: tRNA 5-methylaminomethyl-2-thiouridine biosynthesis bifunctional protein MnmC (635 aa).

The segment at M1 to L231 is tRNA (mnm(5)s(2)U34)-methyltransferase. Residues I249–D635 are FAD-dependent cmnm(5)s(2)U34 oxidoreductase.

The protein in the N-terminal section; belongs to the methyltransferase superfamily. tRNA (mnm(5)s(2)U34)-methyltransferase family. It in the C-terminal section; belongs to the DAO family. FAD is required as a cofactor.

Its subcellular location is the cytoplasm. The enzyme catalyses 5-aminomethyl-2-thiouridine(34) in tRNA + S-adenosyl-L-methionine = 5-methylaminomethyl-2-thiouridine(34) in tRNA + S-adenosyl-L-homocysteine + H(+). Its function is as follows. Catalyzes the last two steps in the biosynthesis of 5-methylaminomethyl-2-thiouridine (mnm(5)s(2)U) at the wobble position (U34) in tRNA. Catalyzes the FAD-dependent demodification of cmnm(5)s(2)U34 to nm(5)s(2)U34, followed by the transfer of a methyl group from S-adenosyl-L-methionine to nm(5)s(2)U34, to form mnm(5)s(2)U34. The chain is tRNA 5-methylaminomethyl-2-thiouridine biosynthesis bifunctional protein MnmC from Azoarcus sp. (strain BH72).